Consider the following 801-residue polypeptide: Phenylalanine--tRNA ligase beta subunit (801 aa).

The tRNA-binding domain occupies 39-147 (GGGLDEVVVA…TDLPLGVPVF (109 aa)). The region spanning 401 to 477 (LPRRTVRFRV…RLNGYNNIPV (77 aa)) is the B5 domain. Residues Asp-455, Asp-461, Glu-464, and Glu-465 each coordinate Mg(2+). Positions 708 to 801 (SRFPDTFRDI…LVKKLAVTIR (94 aa)) constitute an FDX-ACB domain.

The protein belongs to the phenylalanyl-tRNA synthetase beta subunit family. Type 1 subfamily. In terms of assembly, tetramer of two alpha and two beta subunits. The cofactor is Mg(2+).

The protein resides in the cytoplasm. The enzyme catalyses tRNA(Phe) + L-phenylalanine + ATP = L-phenylalanyl-tRNA(Phe) + AMP + diphosphate + H(+). The sequence is that of Phenylalanine--tRNA ligase beta subunit from Geobacter metallireducens (strain ATCC 53774 / DSM 7210 / GS-15).